A 382-amino-acid chain; its full sequence is Sphingoid long-chain base transporter RSB1 (382 aa).

Residues 1–34 (MSNATNNTLGSLLPQLEAAANSNSLYGGMVPNLR) lie on the Extracellular side of the membrane. 2 N-linked (GlcNAc...) asparagine glycosylation sites follow: Asn3 and Asn6. A helical transmembrane segment spans residues 35–55 (FNITMIVIWGILLTIHVVQLL). Residues 56–57 (MR) are Cytoplasmic-facing. A helical membrane pass occupies residues 58 to 78 (QYWFSIAFICTGILEVLGFIG). The Extracellular segment spans residues 79-90 (RTWSHSNVADMD). Residues 91–111 (AFLLNMICLTIAPVFTMGGIY) form a helical membrane-spanning segment. The Cytoplasmic segment spans residues 112-135 (YQLAKLIEVYGHRFSLLPSPMAYS). A helical membrane pass occupies residues 136-156 (FIFICSDIVSLVVQAVGGGLC). The Extracellular portion of the chain corresponds to 157–171 (GVAVTDGTSTTTGNH). The chain crosses the membrane as a helical span at residues 172 to 192 (VFIAGLAIQVASMAIFLMLWF). Over 193-241 (HFLFRIYISVRWEHINSRPISLSLLKISQTEVDYLYREKFHFLRLEPKR) the chain is Cytoplasmic. The helical transmembrane segment at 242-262 (WVFHYFNLAITVAVLTIFTRC) threads the bilayer. Residues 263–281 (CYRLAELVVGWDGYLITHE) lie on the Extracellular side of the membrane. The helical transmembrane segment at 282–302 (WYFIILDALMMAIATVTLTIF) threads the bilayer. The Cytoplasmic portion of the chain corresponds to 303-382 (HPGFAFKGRS…LFSSKKKAKL (80 aa)).

Belongs to the lipid-translocating exporter (LTE) (TC 9.A.26.1) family.

It is found in the cell membrane. In terms of biological role, catalyzes the ATP-dependent translocation of sphingoid long-chain bases (LCBs) from the cytoplasmic site toward the extracytoplasmic side of the membrane (flip-flop). Involved in the establishment of the functional lipid asymmetry of the plasma membrane. Regulates intracellular levels of LCBs, sphingolipid precursors that are growth inhibitory at increased levels. This Saccharomyces cerevisiae (strain ATCC 204508 / S288c) (Baker's yeast) protein is Sphingoid long-chain base transporter RSB1 (RSB1).